A 47-amino-acid polypeptide reads, in one-letter code: Large ribosomal subunit protein bL34 (47 aa).

The protein belongs to the bacterial ribosomal protein bL34 family.

The sequence is that of Large ribosomal subunit protein bL34 from Mycobacterium ulcerans (strain Agy99).